Consider the following 550-residue polypeptide: Carboxypeptidase Y homolog A (550 aa).

An N-terminal signal peptide occupies residues M1–A17. Positions P18 to K131 are excised as a propeptide. Disulfide bonds link C186-C426, C320-C334, C344-C367, C351-C360, and C389-C396. N217 is a glycosylation site (N-linked (GlcNAc...) asparagine). S273 is an active-site residue. D465 is an active-site residue. The N-linked (GlcNAc...) asparagine glycan is linked to N516. Residue H527 is part of the active site.

This sequence belongs to the peptidase S10 family.

The protein localises to the vacuole. The enzyme catalyses Release of a C-terminal amino acid with broad specificity.. Vacuolar carboxypeptidase involved in degradation of small peptides. Digests preferentially peptides containing an aliphatic or hydrophobic residue in P1' position, as well as methionine, leucine or phenylalanine in P1 position of ester substrate. The protein is Carboxypeptidase Y homolog A (cpyA) of Penicillium rubens (strain ATCC 28089 / DSM 1075 / NRRL 1951 / Wisconsin 54-1255) (Penicillium chrysogenum).